The sequence spans 199 residues: UPF0301 protein Daci_1578 (199 aa).

It belongs to the UPF0301 (AlgH) family.

The chain is UPF0301 protein Daci_1578 from Delftia acidovorans (strain DSM 14801 / SPH-1).